The following is a 294-amino-acid chain: MKFAKGHGTENDFVLLCDTPAELRLTAAGVAALCDRRRGLGADGVLRVTTAGAAAAAGVLDRLPDGVAGDDWYMDYRNSDGSVAQMCGNGVRVFAHYLRASGLETRDEFVVGSLAGPRPVTVHAADATGADVSVDMGKANTLGSGGKAFEATVGGRRFAGLAVDVGNPHLACLDPELSVDELAALDVAAPVSFDAAQFPDGVNVEVLTAPAAGVVHMRVHERGVGETRSCGTGTVAAAVAALTAAGADTGTLTVRVPGGDVVVTVTDATSYLRGPSVLVAHGEISEEWWQQAQR.

Substrate is bound by residues Asn-11 and Asn-78. The Proton donor role is filled by Cys-87. Residues 88-89, Asn-167, Asn-203, and 221-222 contribute to the substrate site; these read GN and ER. Cys-230 serves as the catalytic Proton acceptor. Position 231–232 (231–232) interacts with substrate; it reads GT.

The protein belongs to the diaminopimelate epimerase family. Homodimer.

The protein resides in the cytoplasm. The enzyme catalyses (2S,6S)-2,6-diaminopimelate = meso-2,6-diaminopimelate. It participates in amino-acid biosynthesis; L-lysine biosynthesis via DAP pathway; DL-2,6-diaminopimelate from LL-2,6-diaminopimelate: step 1/1. Catalyzes the stereoinversion of LL-2,6-diaminopimelate (L,L-DAP) to meso-diaminopimelate (meso-DAP), a precursor of L-lysine and an essential component of the bacterial peptidoglycan. The sequence is that of Diaminopimelate epimerase from Mycobacterium avium (strain 104).